Reading from the N-terminus, the 132-residue chain is Small ribosomal subunit protein uS8c (132 aa).

The protein belongs to the universal ribosomal protein uS8 family. In terms of assembly, part of the 30S ribosomal subunit.

It localises to the plastid. The protein resides in the chloroplast. Functionally, one of the primary rRNA binding proteins, it binds directly to 16S rRNA central domain where it helps coordinate assembly of the platform of the 30S subunit. This is Small ribosomal subunit protein uS8c (rps8) from Gracilaria tenuistipitata var. liui (Red alga).